A 361-amino-acid chain; its full sequence is MKGLILVGGYGTRLRPLTLTVPKPLVEFGNRPMILHQIEALANAGVTDIVLAVNYRPEVMVETLKKYEKEYGVNITFSVETEPLGTAGPLKLAEDVLKKDNSPFFVLNSDVICEYPFKELADFHKAHGGKGTIVATKVDEPSKYGVIVHDIATPNLIDRFVEKPKEFVGNRINAGLYILNPEVIDLIEMKPTSIEKETFPILVEEKQLYSFDLEGFWMDVGQPKDFLSGTVLYLNSLAKRQPKKLATGANIVGNALIDPTAKISSTAKIGPDVVIGPNVTIGDGVRITRSVVLCNSTIKNHSLVKSTIVGWNSTVGQWCRLEGVTVLGDDVEVKDEIYINGGKVLPHKSISDNVPKEAIIM.

At T153 the chain carries Phosphothreonine. K244 is covalently cross-linked (Glycyl lysine isopeptide (Lys-Gly) (interchain with G-Cter in ubiquitin)).

This sequence belongs to the transferase hexapeptide repeat family.

It localises to the cytoplasm. The enzyme catalyses alpha-D-mannose 1-phosphate + GTP + H(+) = GDP-alpha-D-mannose + diphosphate. It functions in the pathway nucleotide-sugar biosynthesis; GDP-alpha-D-mannose biosynthesis; GDP-alpha-D-mannose from alpha-D-mannose 1-phosphate (GTP route): step 1/1. In terms of biological role, involved in cell wall synthesis where it is required for glycosylation. Involved in cell cycle progression through cell-size checkpoint. In Saccharomyces cerevisiae (strain ATCC 204508 / S288c) (Baker's yeast), this protein is Mannose-1-phosphate guanyltransferase (PSA1).